A 305-amino-acid chain; its full sequence is 4-diphosphocytidyl-2-C-methyl-D-erythritol kinase (305 aa).

Lys-18 is a catalytic residue. Pro-103–Ser-113 provides a ligand contact to ATP. Residue Asp-145 is part of the active site.

Belongs to the GHMP kinase family. IspE subfamily.

The catalysed reaction is 4-CDP-2-C-methyl-D-erythritol + ATP = 4-CDP-2-C-methyl-D-erythritol 2-phosphate + ADP + H(+). Its pathway is isoprenoid biosynthesis; isopentenyl diphosphate biosynthesis via DXP pathway; isopentenyl diphosphate from 1-deoxy-D-xylulose 5-phosphate: step 3/6. In terms of biological role, catalyzes the phosphorylation of the position 2 hydroxy group of 4-diphosphocytidyl-2C-methyl-D-erythritol. This chain is 4-diphosphocytidyl-2-C-methyl-D-erythritol kinase, found in Lawsonia intracellularis (strain PHE/MN1-00).